The sequence spans 247 residues: Lipoprotein-releasing system ATP-binding protein LolD 2 (247 aa).

The ABC transporter domain maps to Leu19–Gly247. Gly56–Thr63 lines the ATP pocket.

Belongs to the ABC transporter superfamily. Lipoprotein translocase (TC 3.A.1.125) family. The complex is composed of two ATP-binding proteins (LolD) and two transmembrane proteins (LolC and LolE).

It localises to the cell inner membrane. Part of the ABC transporter complex LolCDE involved in the translocation of mature outer membrane-directed lipoproteins, from the inner membrane to the periplasmic chaperone, LolA. Responsible for the formation of the LolA-lipoprotein complex in an ATP-dependent manner. The chain is Lipoprotein-releasing system ATP-binding protein LolD 2 from Chlorobaculum tepidum (strain ATCC 49652 / DSM 12025 / NBRC 103806 / TLS) (Chlorobium tepidum).